The primary structure comprises 289 residues: HTH-type transcriptional regulator SoxR (289 aa).

The 58-residue stretch at 1–58 folds into the HTH lysR-type domain; sequence MEIKDLQIFQKVVEYGSVSKAAKSLNYVQSYVTVRIQKLEEELQTELFHRSSRGMVLN. The segment at residues 18 to 37 is a DNA-binding region (H-T-H motif); that stretch reads VSKAAKSLNYVQSYVTVRIQ.

This sequence belongs to the LysR transcriptional regulatory family.

Its function is as follows. Transcriptional repressor of soxA gene expression. The sequence is that of HTH-type transcriptional regulator SoxR (soxR) from Arthrobacter sp. (strain TE1826).